The sequence spans 43 residues: Delta-actitoxin-Bca1a (43 aa).

3 disulfides stabilise this stretch: Cys-1–Cys-41, Cys-3–Cys-31, and Cys-24–Cys-42.

It is found in the secreted. The protein resides in the nematocyst. Functionally, binds specifically to voltage-gated sodium channels (Nav), thereby delaying their inactivation during signal transduction. Thus it strongly stimulates mammalian cardiac muscle contraction. The protein is Delta-actitoxin-Bca1a of Bunodosoma capense (Knobbly sea anemone).